The primary structure comprises 414 residues: Eukaryotic initiation factor 4A-3 (414 aa).

Position 2 is an N-acetylalanine (Ala-2). Residues 41–69 (DSFDAMELQPDLLRGIYAYGFEKPSAIQQ) carry the Q motif motif. The 171-residue stretch at 72 to 242 (IIPFCKGLDV…RKFMNKPVRI (171 aa)) folds into the Helicase ATP-binding domain. 85-92 (AQSGTGKT) lines the ATP pocket. Ser-106 carries the post-translational modification Phosphoserine. Thr-147 carries the post-translational modification Phosphothreonine. A DEAD box motif is present at residues 190–193 (DEAD). Residues 253–414 (GIKQFYVNVD…ELPSNVADLL (162 aa)) form the Helicase C-terminal domain.

The protein belongs to the DEAD box helicase family. eIF4A subfamily. EIF4F is a multi-subunit complex, the composition of which varies with external and internal environmental conditions. It is composed of at least EIF4A, EIF4E and EIF4G.

The protein localises to the cytoplasm. It carries out the reaction ATP + H2O = ADP + phosphate + H(+). In terms of biological role, ATP-dependent RNA helicase which is a subunit of the eIF4F complex involved in cap recognition and is required for mRNA binding to ribosome. In the current model of translation initiation, eIF4A unwinds RNA secondary structures in the 5'-UTR of mRNAs which is necessary to allow efficient binding of the small ribosomal subunit, and subsequent scanning for the initiator codon. This chain is Eukaryotic initiation factor 4A-3 (TIF4A-3), found in Arabidopsis thaliana (Mouse-ear cress).